Consider the following 409-residue polypeptide: WW domain-containing oxidoreductase (409 aa).

The tract at residues 1 to 23 (MIALPDTDSEDELPPGWEERATD) is disordered. 2 consecutive WW domains span residues 11-44 (DELP…HPRT) and 52-86 (GELP…DPRL). Residue 128–134 (GANCGIG) coordinates NADP(+). Serine 257 contacts substrate. The active-site Proton acceptor is the tyrosine 288.

Belongs to the short-chain dehydrogenases/reductases (SDR) family.

The protein localises to the cytoplasm. It localises to the mitochondrion. It is found in the golgi apparatus. The protein resides in the lysosome. In terms of biological role, putative oxidoreductase. May control genotoxic stress-induced cell death. May play a role in TGFB1 signaling and TGFB1-mediated cell death. May also play a role in tumor necrosis factor (TNF)-mediated cell death. May play a role in Wnt signaling. The chain is WW domain-containing oxidoreductase (Wwox) from Drosophila melanogaster (Fruit fly).